The chain runs to 27 residues: Toxin TdII-4 (27 aa).

An LCN-type CS-alpha/beta domain is found at 1-27 (KDGYLMEPNGCKLGCLTRPAKYCWXEE).

The protein belongs to the long (4 C-C) scorpion toxin superfamily. Sodium channel inhibitor family. Beta subfamily. As to expression, expressed by the venom gland.

Its subcellular location is the secreted. In terms of biological role, beta toxins bind voltage-independently at site-4 of sodium channels (Nav) and shift the voltage of activation toward more negative potentials thereby affecting sodium channel activation and promoting spontaneous and repetitive firing. This toxin is active against mammals and also affects neuromuscular preparations of frog. The chain is Toxin TdII-4 from Tityus discrepans (Venezuelan scorpion).